A 194-amino-acid chain; its full sequence is Imidazoleglycerol-phosphate dehydratase (194 aa).

Belongs to the imidazoleglycerol-phosphate dehydratase family.

Its subcellular location is the cytoplasm. The enzyme catalyses D-erythro-1-(imidazol-4-yl)glycerol 3-phosphate = 3-(imidazol-4-yl)-2-oxopropyl phosphate + H2O. It functions in the pathway amino-acid biosynthesis; L-histidine biosynthesis; L-histidine from 5-phospho-alpha-D-ribose 1-diphosphate: step 6/9. The protein is Imidazoleglycerol-phosphate dehydratase of Listeria innocua serovar 6a (strain ATCC BAA-680 / CLIP 11262).